Reading from the N-terminus, the 314-residue chain is DegV domain-containing protein XAC3508 (314 aa).

Residues 3–307 (IGIVVDSACD…KGALAVGFAA (305 aa)) form the DegV domain. Hexadecanoate contacts are provided by Thr-63 and Ser-96.

In terms of biological role, may bind long-chain fatty acids, such as palmitate, and may play a role in lipid transport or fatty acid metabolism. The protein is DegV domain-containing protein XAC3508 of Xanthomonas axonopodis pv. citri (strain 306).